The sequence spans 635 residues: Cytoplasmic polyadenylation element-binding protein 4 (635 aa).

3 disordered regions span residues 1–70 (MQDD…TLRL), 149–284 (GFGG…GFNT), and 337–369 (LFPM…PHQN). Over residues 14-30 (PQLQQESQEGQDKQTLS) the composition is skewed to polar residues. The segment covering 166–182 (PSPHPHFQHPHNQHRRS) has biased composition (basic residues). Positions 216 to 231 (GSYQSPSSTPSSTSWS) are enriched in low complexity. Positions 232–241 (PGGGYGGWGS) are enriched in gly residues. Positions 254 to 283 (PLNSISPLKKSFPNNQTQTQKYPRNNSGFN) are enriched in polar residues. Residues 341–353 (EDERSYGEDERSD) show a composition bias toward basic and acidic residues. 2 RRM domains span residues 378-469 (RKVF…PWNL) and 486-568 (KTIF…PYVL).

It belongs to the RRM CPEB family.

It is found in the cytoplasm. It localises to the cell projection. Its subcellular location is the dendrite. The protein resides in the dendritic spine. The protein localises to the postsynaptic density. It is found in the axon. It localises to the growth cone. Its subcellular location is the endoplasmic reticulum. The protein resides in the perinuclear region. Functionally, sequence-specific RNA-binding protein that binds to the cytoplasmic polyadenylation element (CPE), an uridine-rich sequence element (consensus sequence 5'-UUUUUAU-3') within the mRNA 3'-UTR. RNA binding results in a clear conformational change analogous to the Venus fly trap mechanism. The protein is Cytoplasmic polyadenylation element-binding protein 4 (cpeb4) of Danio rerio (Zebrafish).